Consider the following 177-residue polypeptide: Protein CutA 1, chloroplastic (177 aa).

The N-terminal 60 residues, Met1–Ser60, are a transit peptide targeting the chloroplast.

This sequence belongs to the CutA family. As to quaternary structure, homotrimer.

Its subcellular location is the plastid. It is found in the chloroplast. The protein is Protein CutA 1, chloroplastic (CUTA1) of Oryza sativa subsp. japonica (Rice).